The chain runs to 434 residues: GTPase Obg (434 aa).

The Obg domain maps to 4-162 (ADFIDRIVIY…RKLVLELKLL (159 aa)). The 171-residue stretch at 163 to 333 (ADVGLVGYPN…IVYKLAEIVK (171 aa)) folds into the OBG-type G domain. GTP contacts are provided by residues 169-176 (GYPNVGKS), 194-198 (FTTTI), 215-218 (DIPG), 285-288 (NKID), and 314-316 (SII). Mg(2+)-binding residues include S176 and T196. The OCT domain occupies 355–434 (LWKELPERFN…VAQRAFEYKE (80 aa)).

The protein belongs to the TRAFAC class OBG-HflX-like GTPase superfamily. OBG GTPase family. Monomer. Mg(2+) serves as cofactor.

It is found in the cytoplasm. Functionally, an essential GTPase which binds GTP, GDP and possibly (p)ppGpp with moderate affinity, with high nucleotide exchange rates and a fairly low GTP hydrolysis rate. Plays a role in control of the cell cycle, stress response, ribosome biogenesis and in those bacteria that undergo differentiation, in morphogenesis control. The protein is GTPase Obg of Thermosipho africanus (strain TCF52B).